A 283-amino-acid chain; its full sequence is Elongation factor Ts (283 aa).

Positions 80–83 are involved in Mg(2+) ion dislocation from EF-Tu; it reads TDFV.

The protein belongs to the EF-Ts family.

The protein resides in the cytoplasm. Associates with the EF-Tu.GDP complex and induces the exchange of GDP to GTP. It remains bound to the aminoacyl-tRNA.EF-Tu.GTP complex up to the GTP hydrolysis stage on the ribosome. This chain is Elongation factor Ts, found in Haemophilus influenzae (strain PittGG).